The sequence spans 170 residues: Interferon gamma (170 aa).

An N-terminal signal peptide occupies residues 1 to 20 (MNSRLCIMALLLCFSQALLG). N36 and N103 each carry an N-linked (GlcNAc...) asparagine glycan.

The protein belongs to the type II (or gamma) interferon family. As to quaternary structure, homodimer. Interacts with IFNGR1 (via extracellular domain); this interaction promotes IFNGR1 dimerization. In terms of tissue distribution, released primarily from activated T lymphocytes.

The protein localises to the secreted. Type II interferon produced by immune cells such as T-cells and NK cells that plays crucial roles in antimicrobial, antiviral, and antitumor responses by activating effector immune cells and enhancing antigen presentation. Primarily signals through the JAK-STAT pathway after interaction with its receptor IFNGR1 to affect gene regulation. Upon IFNG binding, IFNGR1 intracellular domain opens out to allow association of downstream signaling components JAK2, JAK1 and STAT1, leading to STAT1 activation, nuclear translocation and transcription of IFNG-regulated genes. Many of the induced genes are transcription factors such as IRF1 that are able to further drive regulation of a next wave of transcription. Plays a role in class I antigen presentation pathway by inducing a replacement of catalytic proteasome subunits with immunoproteasome subunits. In turn, increases the quantity, quality, and repertoire of peptides for class I MHC loading. Increases the efficiency of peptide generation also by inducing the expression of activator PA28 that associates with the proteasome and alters its proteolytic cleavage preference. Up-regulates as well MHC II complexes on the cell surface by promoting expression of several key molecules such as cathepsins B/CTSB, H/CTSH, and L/CTSL. Participates in the regulation of hematopoietic stem cells during development and under homeostatic conditions by affecting their development, quiescence, and differentiation. The protein is Interferon gamma (IFNG) of Sigmodon hispidus (Hispid cotton rat).